The chain runs to 24 residues: Pyruvate kinase (24 aa).

It belongs to the pyruvate kinase family. As to quaternary structure, homotetramer. Requires Mg(2+) as cofactor. It depends on K(+) as a cofactor.

It carries out the reaction pyruvate + ATP = phosphoenolpyruvate + ADP + H(+). The protein operates within carbohydrate degradation; glycolysis; pyruvate from D-glyceraldehyde 3-phosphate: step 5/5. This chain is Pyruvate kinase (pyk), found in Clostridium pasteurianum.